The chain runs to 187 residues: Probable nicotinate-nucleotide adenylyltransferase (187 aa).

This sequence belongs to the NadD family.

The enzyme catalyses nicotinate beta-D-ribonucleotide + ATP + H(+) = deamido-NAD(+) + diphosphate. It participates in cofactor biosynthesis; NAD(+) biosynthesis; deamido-NAD(+) from nicotinate D-ribonucleotide: step 1/1. In terms of biological role, catalyzes the reversible adenylation of nicotinate mononucleotide (NaMN) to nicotinic acid adenine dinucleotide (NaAD). The polypeptide is Probable nicotinate-nucleotide adenylyltransferase (Anaeromyxobacter sp. (strain K)).